We begin with the raw amino-acid sequence, 181 residues long: Acetylcholinesterase (181 aa).

S76 functions as the Acyl-ester intermediate in the catalytic mechanism. The active-site Charge relay system is the E132. The interval 162–181 (WQDQDNGGLPLTGNPTXPHN) is disordered.

Belongs to the type-B carboxylesterase/lipase family. The N-terminus is blocked. Expressed by the venom gland. Is also probably expressed by liver and muscle.

The protein localises to the synapse. The protein resides in the secreted. It is found in the cell membrane. The catalysed reaction is acetylcholine + H2O = choline + acetate + H(+). Functionally, in venom, its toxic role is unclear: it could result in less musculatory control by rapidly hydrolyzing acetylcholine, or that it works synergistically with alkaline phosphatase (ALP) in paralyzing prey through hypotension. In muscle, it terminates signal transduction at the neuromuscular junction by rapid hydrolysis of the acetylcholine released into the synaptic cleft. In liver, its function is unclear: it could serve as a safeguard against any diffusion of acetylcholine from synapses into the circulation. The polypeptide is Acetylcholinesterase (ACHE) (Naja oxiana (Central Asian cobra)).